Consider the following 694-residue polypeptide: Methionine--tRNA ligase (694 aa).

Residues 12 to 22 (PYANGPLHLGH) carry the 'HIGH' region motif. Positions 143, 146, 156, and 159 each coordinate Zn(2+). The short motif at 330-334 (KMSKS) is the 'KMSKS' region element. Position 333 (lysine 333) interacts with ATP. Residues 552–577 (APAAPAATTKPAPSKADAAPAAVANP) form a disordered region. A tRNA-binding domain is found at 591 to 694 (DFAKLDLRIG…AGAQPGMPVR (104 aa)).

Belongs to the class-I aminoacyl-tRNA synthetase family. MetG type 1 subfamily. Homodimer. It depends on Zn(2+) as a cofactor.

It is found in the cytoplasm. It catalyses the reaction tRNA(Met) + L-methionine + ATP = L-methionyl-tRNA(Met) + AMP + diphosphate. In terms of biological role, is required not only for elongation of protein synthesis but also for the initiation of all mRNA translation through initiator tRNA(fMet) aminoacylation. The polypeptide is Methionine--tRNA ligase (Xanthomonas campestris pv. campestris (strain B100)).